The following is an 89-amino-acid chain: Small ribosomal subunit protein uS15 (89 aa).

This sequence belongs to the universal ribosomal protein uS15 family. In terms of assembly, part of the 30S ribosomal subunit. Forms a bridge to the 50S subunit in the 70S ribosome, contacting the 23S rRNA.

Its function is as follows. One of the primary rRNA binding proteins, it binds directly to 16S rRNA where it helps nucleate assembly of the platform of the 30S subunit by binding and bridging several RNA helices of the 16S rRNA. Functionally, forms an intersubunit bridge (bridge B4) with the 23S rRNA of the 50S subunit in the ribosome. This is Small ribosomal subunit protein uS15 from Methylocella silvestris (strain DSM 15510 / CIP 108128 / LMG 27833 / NCIMB 13906 / BL2).